The primary structure comprises 586 residues: MSAILSADDLNDFISPGVACIKPIETLPTQPGPEQSQQPQSLEFEVILDGQQPTTGSSSNGTTPPAQISLTDCLACSGCVTSAEAVLVSLQSHNEVLTLLDAAPALRVIQDSDGKPVVSGLENPEAKLFVASVSPQTRASLAAACGGAVTEQQAGWMIEQLLMGPAGLAGGGKHGNGFTWVVDTNTAREACLMLGSDEVLGGGSWGGSDKPTSPILTSSCPGWVCYAEKTHPYVLPHLSRVKSPQALMGTLLKTTLSRVLGIAPDRVWHLAVMPCFDKKLEASREELTDTAWGSGGVPGRGVRDVDCVITSKEILMLAASKGVDFFGLAKSAPVKQPMFPDSDIHRFLFPAQRRKQLRDGGTSGGNLHYIIQDVLSKHAGSQIQMTRGRNADVVEFAVLSSSGETIFKAARYYGFRNIQNLVRKLKPAKASRMPGGKPFGSARRPAGKSATLEHSYVEVMACPGGCTNGGGQIKVDDQVVIDRKNFGEKPGPDEQKAWQAEVDEAYFSGDESDPAQGAGDDQSMELIAGISPSYIRDTLAHWADITGIQLDKLVYTSYREVVSDVGKPISDTERVVQLAGKIGGGW.

Residues Cys-20, Cys-73, Cys-76, Cys-79, Cys-220, Cys-275, Cys-462, and Cys-466 each contribute to the [4Fe-4S] cluster site.

Belongs to the NARF family.

Its function is as follows. Component of the cytosolic Fe/S protein assembly machinery. Required for maturation of extramitochondrial Fe/S proteins. May play a role in the transfer of pre-assembled Fe/S clusters to target apoproteins. The protein is Cytosolic Fe-S cluster assembly factor NAR1 (NAR1) of Chaetomium globosum (strain ATCC 6205 / CBS 148.51 / DSM 1962 / NBRC 6347 / NRRL 1970) (Soil fungus).